A 598-amino-acid chain; its full sequence is tRNA(Met) cytidine acetyltransferase TmcA (598 aa).

ATP is bound by residues Gln-141, Gly-163–Lys-172, and Arg-288. The N-acetyltransferase domain maps to Thr-332 to Ser-490. Acetyl-CoA is bound by residues Ile-411–Val-413, Gln-418–Ser-424, and Arg-462.

Belongs to the RNA cytidine acetyltransferase family. TmcA subfamily.

It is found in the cytoplasm. The catalysed reaction is cytidine(34) in elongator tRNA(Met) + acetyl-CoA + ATP + H2O = N(4)-acetylcytidine(34) in elongator tRNA(Met) + ADP + phosphate + CoA + H(+). In terms of biological role, catalyzes the formation of N(4)-acetylcytidine (ac(4)C) at the wobble position of tRNA(Met), by using acetyl-CoA as an acetyl donor and ATP (or GTP). The sequence is that of tRNA(Met) cytidine acetyltransferase TmcA from Haemophilus ducreyi (strain 35000HP / ATCC 700724).